The following is a 309-amino-acid chain: MRLEQLQAALRVAETGSFQEAAQKVGCNQSTISRQVKGLEDELGIALFRRQGRMKLTAAGERLLPRLRRICQEWQTACTEIEELLTGRQTELCMAIADSIGGCYLPAVLNRFQQQWPSIHLRVSTLGSDRALKVLRDGLIDLAIVMDSPTLTTSAGLVVDLLLEEEVQVLLSVDHPLADQKAIAWEQLSHVPQVVFKDGYGMQRLVEQRFRELGLELNSCLELNSLDSFRGVVREGYWLALLPQAALVDARHDPRLVIRPTAEPRLTRRIKLVIPEEQLSLPPVRHFRQLCREAMTAELCDFKTLSQLF.

Positions 1–57 constitute an HTH lysR-type domain; sequence MRLEQLQAALRVAETGSFQEAAQKVGCNQSTISRQVKGLEDELGIALFRRQGRMKLT. A DNA-binding region (H-T-H motif) is located at residues 18-37; that stretch reads FQEAAQKVGCNQSTISRQVK.

The protein belongs to the LysR transcriptional regulatory family.

Functionally, seems to regulate utilization of fixed nitrogen by controlling the expression of a certain gene(s) involved in nitrogen metabolism. This is Probable nitrogen assimilation transcriptional activator (ntcB) from Synechococcus elongatus (strain ATCC 33912 / PCC 7942 / FACHB-805) (Anacystis nidulans R2).